Here is a 236-residue protein sequence, read N- to C-terminus: F-box and leucine-rich protein 22 (236 aa).

Positions 1 to 46 (MHITQLNRECLLCLFSFLDKDSRRSLSRTCSQLRDVFEDPTLWPLL) constitute an F-box domain. LRR repeat units lie at residues 15–40 (FSFLDKDSRRSLSRTCSQLRDVFEDP), 43–72 (WPLLHFHSLAELKKDNFRLSPALRSLSICW), 98–123 (HESLVNDFLLQVCNRCPNLTSVTLSG), 124–149 (CGHVTDDCLARLLLSCPRLRTLRLEN), 150–175 (CARVTNRTLAAVAAHGRALQTLHVDF), and 176–201 (CRNVSAAGLLRLRAACPNLRLSAERS).

As to quaternary structure, directly interacts with SKP1 and CUL1. As to expression, enriched in cardiac muscle (at protein level).

It is found in the cytoplasm. It localises to the myofibril. Its subcellular location is the sarcomere. The protein resides in the z line. The protein operates within protein modification; protein ubiquitination. In terms of biological role, substrate-recognition component of the SCF (SKP1-CUL1-F-box protein)-type E3 ubiquitin ligase complex. Promotes ubiquitination of sarcomeric proteins alpha-actinin-2 (ACTN2) and filamin-C (FLNC). The polypeptide is F-box and leucine-rich protein 22 (Fbxl22) (Mus musculus (Mouse)).